The primary structure comprises 509 residues: Lysine--tRNA ligase (509 aa).

Residues Glu-395 and Glu-402 each coordinate Mg(2+).

Belongs to the class-II aminoacyl-tRNA synthetase family. In terms of assembly, homodimer. The cofactor is Mg(2+).

It localises to the cytoplasm. It catalyses the reaction tRNA(Lys) + L-lysine + ATP = L-lysyl-tRNA(Lys) + AMP + diphosphate. The protein is Lysine--tRNA ligase of Fervidobacterium nodosum (strain ATCC 35602 / DSM 5306 / Rt17-B1).